Reading from the N-terminus, the 223-residue chain is UPF0441 protein KPK_0672 (223 aa).

The disordered stretch occupies residues 165-223 (SYGAAQPGRTMNVPKTAMAPKPATTTTVTRGGFGESVAKQSTMQRSAAGSTSSSRSMGG). 2 stretches are compositionally biased toward low complexity: residues 177-193 (VPKT…TTVT) and 209-223 (RSAA…SMGG).

This sequence belongs to the UPF0441 family.

The chain is UPF0441 protein KPK_0672 from Klebsiella pneumoniae (strain 342).